Reading from the N-terminus, the 155-residue chain is Xanthine-guanine phosphoribosyltransferase (155 aa).

5-phospho-alpha-D-ribose 1-diphosphate is bound by residues 37-38 (RG) and 91-99 (DDLVDTGNT). Residue Asp92 participates in Mg(2+) binding. Guanine is bound by residues Asp95 and Ile138. Asp95 and Ile138 together coordinate xanthine. GMP is bound by residues 95-99 (DTGNT) and 137-138 (WI).

Belongs to the purine/pyrimidine phosphoribosyltransferase family. XGPT subfamily. Homotetramer. Mg(2+) is required as a cofactor.

The protein resides in the cell inner membrane. It carries out the reaction GMP + diphosphate = guanine + 5-phospho-alpha-D-ribose 1-diphosphate. It catalyses the reaction XMP + diphosphate = xanthine + 5-phospho-alpha-D-ribose 1-diphosphate. The enzyme catalyses IMP + diphosphate = hypoxanthine + 5-phospho-alpha-D-ribose 1-diphosphate. Its pathway is purine metabolism; GMP biosynthesis via salvage pathway; GMP from guanine: step 1/1. The protein operates within purine metabolism; XMP biosynthesis via salvage pathway; XMP from xanthine: step 1/1. Functionally, acts on guanine, xanthine and to a lesser extent hypoxanthine. Its function is as follows. Purine salvage pathway enzyme that catalyzes the transfer of the ribosyl-5-phosphate group from 5-phospho-alpha-D-ribose 1-diphosphate (PRPP) to the N9 position of the 6-oxopurines guanine and xanthine to form the corresponding ribonucleotides GMP (guanosine 5'-monophosphate) and XMP (xanthosine 5'-monophosphate), with the release of PPi. To a lesser extent, also acts on hypoxanthine. The chain is Xanthine-guanine phosphoribosyltransferase from Haemophilus influenzae (strain ATCC 51907 / DSM 11121 / KW20 / Rd).